Reading from the N-terminus, the 323-residue chain is MTTYALVGDVGGTNARLALCAVATGEILQAKTYSGLEYESLEDVIKQYLSEHQAKVTDACIAIACPITGDWVAMTNHTWAFSIAAMQQNLGLDHLEVINDFTAVSMAIPVLPAQDVLQFGGTQPQPGKPVAVYGAGTGLGVAHLVNVDRRWISLAGEGGHVDFAPNSEEEDQILAVLRQELGHVSAERVLSGPGLVNLYRAIVISDARLPEKLAPKDITARALADSCTDCRRALSLFCVIMGRFGGNLALNLSTFGGVYIAGGIVPRFMEFFKASGFRAAFEDKGRFKDFLQDIPVYMITHPQPGLLGAGAYLRQKLGYELSS.

ATP is bound at residue 8–13 (GDVGGT).

Belongs to the bacterial glucokinase family.

The protein localises to the cytoplasm. It carries out the reaction D-glucose + ATP = D-glucose 6-phosphate + ADP + H(+). The chain is Glucokinase from Yersinia pseudotuberculosis serotype I (strain IP32953).